Reading from the N-terminus, the 262-residue chain is ATP synthase subunit a (262 aa).

Helical transmembrane passes span 26-46 (VHID…FVFS), 86-106 (VAPL…IDLI), 130-150 (DISA…FYTI), 204-226 (LIFI…GIPL), and 240-260 (LQAF…YNKA).

This sequence belongs to the ATPase A chain family. As to quaternary structure, F-type ATPases have 2 components, CF(1) - the catalytic core - and CF(0) - the membrane proton channel. CF(1) has five subunits: alpha(3), beta(3), gamma(1), delta(1), epsilon(1). CF(0) has three main subunits: a(1), b(2) and c(9-12). The alpha and beta chains form an alternating ring which encloses part of the gamma chain. CF(1) is attached to CF(0) by a central stalk formed by the gamma and epsilon chains, while a peripheral stalk is formed by the delta and b chains.

It localises to the cell inner membrane. Key component of the proton channel; it plays a direct role in the translocation of protons across the membrane. The protein is ATP synthase subunit a of Haemophilus influenzae (strain PittEE).